We begin with the raw amino-acid sequence, 429 residues long: Endo-beta-1,4-galactanase (429 aa).

A signal peptide spans 1 to 21 (MKSKVKMFFAAAIVWSACSST). A substrate-binding site is contributed by 146–149 (DPAK). Glu-194 serves as the catalytic Proton donor. Residues 233 to 234 (TN) and His-267 contribute to the substrate site. Glu-292 functions as the Nucleophile in the catalytic mechanism. Residue Thr-296 participates in substrate binding. The Ca(2+) site is built by Asp-301, Asp-303, His-305, and Asn-307. 2 residues coordinate substrate: Lys-311 and Asp-388. Ser-396 and Asp-399 together coordinate Ca(2+).

This sequence belongs to the glycosyl hydrolase 53 family. Ca(2+) serves as cofactor.

It is found in the secreted. The enzyme catalyses The enzyme specifically hydrolyzes (1-&gt;4)-beta-D-galactosidic linkages in type I arabinogalactans.. Involved in galactan degradation. Degrades arabinose-free galactan to galactooligosaccharides, producing galactotetraose as the main product along with galactotriose, galactobiose, and galactose. Is also able to degrade galactotetraose, galactotriose and galactobiose, suggesting an additional exo-mode of activity. May hydrolyze the beta-1,4-galactan linkages of the galactan portion of arabinogalactan type I, a pectic plant polysaccharide from which most of the arabinose has been removed. This Bacillus subtilis (strain 168) protein is Endo-beta-1,4-galactanase.